The sequence spans 397 residues: Succinate--CoA ligase [ADP-forming] subunit beta (397 aa).

One can recognise an ATP-grasp domain in the interval 9–254 (KALLRQYGAP…ETEEDPKELA (246 aa)). Residues Lys-46, 53 to 55 (GRG), Glu-109, Ser-112, and Glu-117 contribute to the ATP site. Mg(2+) is bound by residues Asn-209 and Asp-223. Residues Asn-274 and 331 to 333 (GIM) contribute to the substrate site.

This sequence belongs to the succinate/malate CoA ligase beta subunit family. In terms of assembly, heterotetramer of two alpha and two beta subunits. Mg(2+) is required as a cofactor.

It carries out the reaction succinate + ATP + CoA = succinyl-CoA + ADP + phosphate. The catalysed reaction is GTP + succinate + CoA = succinyl-CoA + GDP + phosphate. Its pathway is carbohydrate metabolism; tricarboxylic acid cycle; succinate from succinyl-CoA (ligase route): step 1/1. Succinyl-CoA synthetase functions in the citric acid cycle (TCA), coupling the hydrolysis of succinyl-CoA to the synthesis of either ATP or GTP and thus represents the only step of substrate-level phosphorylation in the TCA. The beta subunit provides nucleotide specificity of the enzyme and binds the substrate succinate, while the binding sites for coenzyme A and phosphate are found in the alpha subunit. This chain is Succinate--CoA ligase [ADP-forming] subunit beta, found in Paracoccus denitrificans (strain Pd 1222).